Here is an 852-residue protein sequence, read N- to C-terminus: DNA mismatch repair protein MutS (852 aa).

Position 602–609 (602–609 (GPNMSGKS)) interacts with ATP.

Belongs to the DNA mismatch repair MutS family.

In terms of biological role, this protein is involved in the repair of mismatches in DNA. It is possible that it carries out the mismatch recognition step. This protein has a weak ATPase activity. This is DNA mismatch repair protein MutS from Streptococcus thermophilus (strain ATCC BAA-491 / LMD-9).